Here is a 381-residue protein sequence, read N- to C-terminus: Spermidine/putrescine import ATP-binding protein PotA (381 aa).

Positions 22 to 252 (VELRNVFKFF…PKTSFVADFI (231 aa)) constitute an ABC transporter domain. 54-61 (GPSGCGKT) is an ATP binding site.

It belongs to the ABC transporter superfamily. Spermidine/putrescine importer (TC 3.A.1.11.1) family. The complex is composed of two ATP-binding proteins (PotA), two transmembrane proteins (PotB and PotC) and a solute-binding protein (PotD).

The protein localises to the cell inner membrane. The enzyme catalyses ATP + H2O + polyamine-[polyamine-binding protein]Side 1 = ADP + phosphate + polyamineSide 2 + [polyamine-binding protein]Side 1.. In terms of biological role, part of the ABC transporter complex PotABCD involved in spermidine/putrescine import. Responsible for energy coupling to the transport system. This chain is Spermidine/putrescine import ATP-binding protein PotA, found in Trichormus variabilis (strain ATCC 29413 / PCC 7937) (Anabaena variabilis).